Consider the following 611-residue polypeptide: Major facilitator superfamily domain-containing protein YCR023C (611 aa).

The Extracellular segment spans residues M1–K89. A helical transmembrane segment spans residues I90–R110. At N111–T152 the chain is on the cytoplasmic side. Residues M153–F173 form a helical membrane-spanning segment. At R174 to A199 the chain is on the extracellular side. A helical transmembrane segment spans residues L200–L220. Residues E221–K353 are Cytoplasmic-facing. Residues D261–E271 are compositionally biased toward basic and acidic residues. The tract at residues D261–I301 is disordered. A Phosphoserine modification is found at S313. A helical transmembrane segment spans residues V354–N372. Residues E373–G413 lie on the Extracellular side of the membrane. Residues T414–V434 traverse the membrane as a helical segment. Residues D435–T442 lie on the Cytoplasmic side of the membrane. The helical transmembrane segment at I443 to F463 threads the bilayer. Residues L464 to D542 are Extracellular-facing. Residues V543–Y563 form a helical membrane-spanning segment. Over K564–T611 the chain is Cytoplasmic. S603 is subject to Phosphoserine.

It belongs to the major facilitator superfamily.

It localises to the membrane. It catalyses the reaction chloride(in) = chloride(out). Functionally, outward-rectifying chloride channel involved in chloride homeostasis. This Saccharomyces cerevisiae (strain ATCC 204508 / S288c) (Baker's yeast) protein is Major facilitator superfamily domain-containing protein YCR023C.